Reading from the N-terminus, the 229-residue chain is Potassium/proton antiporter CemA (229 aa).

Transmembrane regions (helical) follow at residues 7 to 27 (FTPL…SLSF), 114 to 134 (IISF…LVIL), and 190 to 210 (ISGL…YWIF).

Belongs to the CemA family.

It is found in the plastid. It localises to the chloroplast inner membrane. It catalyses the reaction K(+)(in) + H(+)(out) = K(+)(out) + H(+)(in). Functionally, contributes to K(+)/H(+) antiport activity by supporting proton efflux to control proton extrusion and homeostasis in chloroplasts in a light-dependent manner to modulate photosynthesis. Prevents excessive induction of non-photochemical quenching (NPQ) under continuous-light conditions. Indirectly promotes efficient inorganic carbon uptake into chloroplasts. The sequence is that of Potassium/proton antiporter CemA from Jasminum nudiflorum (Winter jasmine).